The primary structure comprises 293 residues: uncharacterized protein (293 aa).

The region spanning methionine 1–threonine 58 is the HTH lysR-type domain. Positions methionine 18 to glutamine 37 form a DNA-binding region, H-T-H motif.

This sequence belongs to the LysR transcriptional regulatory family.

This is an uncharacterized protein from Bacillus subtilis (strain 168).